The sequence spans 265 residues: Isoprenyl transferase (265 aa).

Residue Asp35 is part of the active site. Residue Asp35 coordinates Mg(2+). Residues 36–39 (GNGR), Trp40, Arg48, His52, and 80–82 (SIE) contribute to the substrate site. Catalysis depends on Asn83, which acts as the Proton acceptor. Substrate is bound by residues Trp84, Arg86, Arg203, and 209 to 211 (RIS). Position 222 (Glu222) interacts with Mg(2+).

It belongs to the UPP synthase family. Homodimer. The cofactor is Mg(2+).

In terms of biological role, catalyzes the condensation of isopentenyl diphosphate (IPP) with allylic pyrophosphates generating different type of terpenoids. The protein is Isoprenyl transferase of Chlorobaculum tepidum (strain ATCC 49652 / DSM 12025 / NBRC 103806 / TLS) (Chlorobium tepidum).